We begin with the raw amino-acid sequence, 1792 residues long: Protein TIC 214 (1792 aa).

6 consecutive transmembrane segments (helical) span residues 18 to 38, 64 to 84, 87 to 107, 129 to 149, 165 to 185, and 221 to 241; these read IINS…FSIG, FITG…HLAL, PHII…GNNH, IFFH…SSIL, IFLI…MKWI, and IFLV…PPPF.

It belongs to the TIC214 family. As to quaternary structure, part of the Tic complex.

Its subcellular location is the plastid. It localises to the chloroplast inner membrane. Its function is as follows. Involved in protein precursor import into chloroplasts. May be part of an intermediate translocation complex acting as a protein-conducting channel at the inner envelope. The sequence is that of Protein TIC 214 from Glycine max (Soybean).